A 79-amino-acid polypeptide reads, in one-letter code: Small ribosomal subunit protein bS18 (79 aa).

In terms of assembly, part of the 30S ribosomal subunit. Forms a tight heterodimer with protein bS6. In terms of processing, both N-terminus methionine truncation and retention have been observed for this protein. May be methylated up to 6 times, on undetermined residues.

In terms of biological role, binds as a heterodimer with protein bS6 to the central domain of the 16S rRNA, where it helps stabilize the platform of the 30S subunit. This is Small ribosomal subunit protein bS18 from Rhodopseudomonas palustris (strain ATCC BAA-98 / CGA009).